A 393-amino-acid chain; its full sequence is NAD(P)H-quinone oxidoreductase subunit H, chloroplastic (393 aa).

Belongs to the complex I 49 kDa subunit family. In terms of assembly, NDH is composed of at least 16 different subunits, 5 of which are encoded in the nucleus.

Its subcellular location is the plastid. It localises to the chloroplast thylakoid membrane. It catalyses the reaction a plastoquinone + NADH + (n+1) H(+)(in) = a plastoquinol + NAD(+) + n H(+)(out). The enzyme catalyses a plastoquinone + NADPH + (n+1) H(+)(in) = a plastoquinol + NADP(+) + n H(+)(out). Its function is as follows. NDH shuttles electrons from NAD(P)H:plastoquinone, via FMN and iron-sulfur (Fe-S) centers, to quinones in the photosynthetic chain and possibly in a chloroplast respiratory chain. The immediate electron acceptor for the enzyme in this species is believed to be plastoquinone. Couples the redox reaction to proton translocation, and thus conserves the redox energy in a proton gradient. This Huperzia lucidula (Shining clubmoss) protein is NAD(P)H-quinone oxidoreductase subunit H, chloroplastic.